The chain runs to 342 residues: Ribosomal RNA small subunit methyltransferase C (342 aa).

The protein belongs to the methyltransferase superfamily. RsmC family. As to quaternary structure, monomer.

It is found in the cytoplasm. The catalysed reaction is guanosine(1207) in 16S rRNA + S-adenosyl-L-methionine = N(2)-methylguanosine(1207) in 16S rRNA + S-adenosyl-L-homocysteine + H(+). Specifically methylates the guanine in position 1207 of 16S rRNA in the 30S particle. The sequence is that of Ribosomal RNA small subunit methyltransferase C from Klebsiella pneumoniae subsp. pneumoniae (strain ATCC 700721 / MGH 78578).